The chain runs to 209 residues: Guanylate kinase (209 aa).

A Guanylate kinase-like domain is found at 9 to 188 (GIMLVISSPS…SVYQIKCIFT (180 aa)). An ATP-binding site is contributed by 16 to 23 (SPSGGGKT).

This sequence belongs to the guanylate kinase family.

Its subcellular location is the cytoplasm. It catalyses the reaction GMP + ATP = GDP + ADP. Its function is as follows. Essential for recycling GMP and indirectly, cGMP. In Ehrlichia chaffeensis (strain ATCC CRL-10679 / Arkansas), this protein is Guanylate kinase.